Reading from the N-terminus, the 88-residue chain is Small ribosomal subunit protein bS20 (88 aa).

Residues 1–27 (MANSKSAKKRALQSEKRRQHNASRRSM) form a disordered region.

The protein belongs to the bacterial ribosomal protein bS20 family.

In terms of biological role, binds directly to 16S ribosomal RNA. The protein is Small ribosomal subunit protein bS20 of Shewanella loihica (strain ATCC BAA-1088 / PV-4).